A 284-amino-acid chain; its full sequence is Bifunctional protein FolD (284 aa).

Residues 166 to 168 and Ile-232 each bind NADP(+); that span reads GAS.

This sequence belongs to the tetrahydrofolate dehydrogenase/cyclohydrolase family. Homodimer.

The catalysed reaction is (6R)-5,10-methylene-5,6,7,8-tetrahydrofolate + NADP(+) = (6R)-5,10-methenyltetrahydrofolate + NADPH. It carries out the reaction (6R)-5,10-methenyltetrahydrofolate + H2O = (6R)-10-formyltetrahydrofolate + H(+). It functions in the pathway one-carbon metabolism; tetrahydrofolate interconversion. Catalyzes the oxidation of 5,10-methylenetetrahydrofolate to 5,10-methenyltetrahydrofolate and then the hydrolysis of 5,10-methenyltetrahydrofolate to 10-formyltetrahydrofolate. The chain is Bifunctional protein FolD from Shewanella amazonensis (strain ATCC BAA-1098 / SB2B).